Reading from the N-terminus, the 479-residue chain is Small ribosomal subunit protein bS1 (479 aa).

S1 motif domains lie at 36-105, 123-188, 209-277, and 294-363; these read GDIV…LSKK, DEAV…LSRR, GAIR…LSLK, and GQIV…LSLK. The segment at 429–466 is disordered; sequence TAQMEKFAAAEAEAANAPVSNGSSRSEESSGGTLASDA. Over residues 437 to 460 the composition is skewed to low complexity; the sequence is AAEAEAANAPVSNGSSRSEESSGG.

This sequence belongs to the bacterial ribosomal protein bS1 family. As to quaternary structure, binds uncharacterized protein MSMEG_2731/MSMEI_2664.

Its function is as follows. Binds mRNA, facilitating recognition of most mRNAs by the 30S ribosomal subunit during translation initiation. Plays a role in trans-translation; binds tmRNA (the product of the ssrA gene). Binds very poorly to pyrazinoic acid (POA), the active form of the prodrug pyrazinamide (PZA); POA does not disrupt trans-translation in this organism. M.smegmatis is resistant to the antibiotic PZA. In trans-translation Ala-aminoacylated transfer-messenger RNA (tmRNA, product of the ssrA gene; the 2 termini fold to resemble tRNA(Ala) while it encodes a short internal open reading frame (the tag peptide)) acts like a tRNA, entering the A-site of the ribosome and displacing the stalled mRNA (which is subsequently degraded). The ribosome then switches to translate the ORF on the tmRNA, the nascent peptide is terminated with the 'tag peptide' encoded by the tmRNA and thus targeted for degradation. This is Small ribosomal subunit protein bS1 (rpsA) from Mycolicibacterium smegmatis (strain ATCC 700084 / mc(2)155) (Mycobacterium smegmatis).